A 346-amino-acid polypeptide reads, in one-letter code: MTLDDDDYIKQMELQRKAFESQFGSLESMGFEDKTKNIRTEVDTRDSSGDEIDNSDHGSDFKDGTIESSNSSDEDSGNETAEENNQDSKPKTQPKVIRFNGPSDVYVPPSKKTQKLLRSGKTLTQINKKLESTEAKEEKEDETLEAENLQNDLELQQFLRESHLLSAFNNGGSGSTNSGVSLTLQSMGGGNDDGIVYQDDQVIGKARSRTLEMRLNRLSRVNGHQDKINKLEKVPMHIRRGMIDKHVKRIKKYEQEAAEGGIVLSKVKKGQFRKIESTYKKDIERRIGGSIKARDKEKATKRERGLKISSVGRSTRNGLIVSKRDIARISGGERSGKFNGKKKSRR.

Disordered stretches follow at residues 22-120 and 323-346; these read QFGS…LRSG and KRDI…KSRR. A compositionally biased stretch (basic and acidic residues) spans 31 to 65; that stretch reads FEDKTKNIRTEVDTRDSSGDEIDNSDHGSDFKDGT. Residues 72–85 are compositionally biased toward acidic residues; the sequence is SDEDSGNETAEENN.

In terms of assembly, interacts with KRR1.

It localises to the nucleus. It is found in the nucleolus. Functionally, required for pre-rRNA processing and 40S ribosomal subunit assembly. Seems to act in the processing of 35S rRNA at the A(0), A(1), and A(2) cleavage sites. The chain is Protein FAF1 (FAF1) from Saccharomyces cerevisiae (strain ATCC 204508 / S288c) (Baker's yeast).